The chain runs to 382 residues: MKALHFGAGNIGRGFIGKLLADAGIQLTFADVNQVVLDALNARHSYQVHVVGETEQVDTVSGVNAVSSIGDDVVDLIAQVDLVTTAVGPVVLERIAPAIAKGLVKRKEQGNESPLNIIACENMVRGTTQLKGHVMNALPEDAKAWVEEHVGFVDSAVDRIVPPSASATNDPLEVTVETFSEWIVDKTQFKGALPNIPGMELTDNLMAFVERKLFTLNTGHAITAYLGKLAGHQTIRDAILDEKIRAVVKGAMEESGAVLIKRYGFDADKHAAYIRKILGRFENPYLKDDVERVGRQPLRKLSAGDRLIKPLLGTLEYGLPHKNLIEGIAAAMHFRSEDDPQAQELAALIADKGPQAALAQISGLDANSEVVSEAVTAYKAMQ.

An NAD(+)-binding site is contributed by 3–14 (ALHFGAGNIGRG). The residue at position 269 (Lys-269) is an N6-acetyllysine.

Belongs to the mannitol dehydrogenase family.

The catalysed reaction is D-mannitol 1-phosphate + NAD(+) = beta-D-fructose 6-phosphate + NADH + H(+). The sequence is that of Mannitol-1-phosphate 5-dehydrogenase from Escherichia coli O17:K52:H18 (strain UMN026 / ExPEC).